The sequence spans 576 residues: Glutamine--tRNA ligase (576 aa).

The 'HIGH' region motif lies at 47-57 (PEPNGYLHIGH). ATP contacts are provided by residues 48-50 (EPN) and 54-60 (HIGHAKS). L-glutamine-binding residues include aspartate 80 and tyrosine 229. ATP-binding positions include threonine 248 and 283–284 (RL). Residues 290–294 (ITSKR) carry the 'KMSKS' region motif.

This sequence belongs to the class-I aminoacyl-tRNA synthetase family. Monomer.

The protein localises to the cytoplasm. The enzyme catalyses tRNA(Gln) + L-glutamine + ATP = L-glutaminyl-tRNA(Gln) + AMP + diphosphate. This is Glutamine--tRNA ligase from Ralstonia pickettii (strain 12J).